Here is a 139-residue protein sequence, read N- to C-terminus: Transcription antitermination protein NusB (139 aa).

It belongs to the NusB family.

Involved in transcription antitermination. Required for transcription of ribosomal RNA (rRNA) genes. Binds specifically to the boxA antiterminator sequence of the ribosomal RNA (rrn) operons. This chain is Transcription antitermination protein NusB, found in Natranaerobius thermophilus (strain ATCC BAA-1301 / DSM 18059 / JW/NM-WN-LF).